A 780-amino-acid chain; its full sequence is Dynamin-related protein 3B (780 aa).

Position 2 is an N-acetylserine (serine 2). Residues 40–315 form the Dynamin-type G domain; that stretch reads TIALPQVAVV…LVQHIKALLP (276 aa). Residues 50–57 form a G1 motif region; that stretch reads GSQSSGKS. Position 50 to 57 (50 to 57) interacts with GTP; that stretch reads GSQSSGKS. The G2 motif stretch occupies residues 76-78; sequence CTR. A G3 motif region spans residues 157–160; it reads DLPG. Residues 157-161 and 226-229 contribute to the GTP site; these read DLPGI and TKLD. The segment at 226 to 229 is G4 motif; that stretch reads TKLD. Positions 256–259 are G5 motif; sequence VNRS. Disordered stretches follow at residues 536 to 558 and 573 to 592; these read PVARPRDTVEPERTASSGSQIKT and QAVPTAADAERPAPAGSTSW. The segment covering 539-548 has biased composition (basic and acidic residues); it reads RPRDTVEPER. Residues 549–558 are compositionally biased toward polar residues; sequence TASSGSQIKT. A GED domain is found at 654-745; sequence IEITKLLLKS…TLDELPLEAE (92 aa). A compositionally biased stretch (basic and acidic residues) spans 753 to 770; it reads IGSEAKHEELPGTRRSRT. Positions 753–780 are disordered; the sequence is IGSEAKHEELPGTRRSRTETNGNGRLHM. Residues 771-780 show a composition bias toward polar residues; the sequence is ETNGNGRLHM.

It belongs to the TRAFAC class dynamin-like GTPase superfamily. Dynamin/Fzo/YdjA family. As to quaternary structure, interacts with ARC5 on peroxisomes and ELM1 on mitochondria.

It localises to the mitochondrion. It is found in the peroxisome. In terms of biological role, involved in the control of mitochondrial and peroxisomal division and morphology. The sequence is that of Dynamin-related protein 3B (DRP3B) from Arabidopsis thaliana (Mouse-ear cress).